The chain runs to 572 residues: Chromatin assembly factor 1 subunit B (572 aa).

WD repeat units follow at residues 11–54 (HNKE…DGKA), 64–103 (RHTKAVNVVRFSPTGEILASGGDDAVILLWKMNDSKEPEQ), 127–166 (GHLEDVYDICWATDGNLMTSASVDNTVIIWDVSKGQKISI), 169–208 (EHKSYVQGVTWDPLGQYIATLSCDRVLRIYNTQKKRVAFN), 228–279 (FHDD…RPIA), 301–347 (RPVA…PFGY), and 351–392 (IHYH…IPLK). Phosphothreonine is present on threonine 401. The interval 403–572 (DTAKKAKNQT…LAPDDSSKTV (170 aa)) is disordered. The span at 411-430 (QTHQGSSPGSRSVEGTPSNR) shows a compositional bias: polar residues. The residue at position 416 (serine 416) is a Phosphoserine. Threonine 426 is modified (phosphothreonine). The segment covering 431 to 452 (TQDPSSPCTTPSPTTQSPAPSA) has biased composition (low complexity). At serine 436 the chain carries Phosphoserine. Threonine 440 bears the Phosphothreonine mark. A phosphoserine mark is found at serine 456 and serine 465. Position 501 is an N6-acetyllysine (lysine 501). Residues threonine 502 and threonine 510 each carry the phosphothreonine modification. Residues 511–529 (PLKTDTVPNPQPNSGTAPS) are compositionally biased toward polar residues. The segment covering 546–559 (PELKRPRLEEREGD) has biased composition (basic and acidic residues).

The protein belongs to the WD repeat HIR1 family. In terms of assembly, subunit of the CAF-1 complex that contains RBBP4, CHAF1B and CHAF1A. CHAF1A binds directly to CHAF1B. Interacts with histones H3.1, H3.2 and H3.1t.

Its subcellular location is the nucleus. It localises to the cytoplasm. Functionally, acts as a component of the histone chaperone complex chromatin assembly factor 1 (CAF-1), which assembles histone octamers onto DNA during replication and repair. CAF-1 performs the first step of the nucleosome assembly process, bringing newly synthesized histones H3 and H4 to replicating DNA; histones H2A/H2B can bind to this chromatin precursor subsequent to DNA replication to complete the histone octamer. This chain is Chromatin assembly factor 1 subunit B, found in Mus musculus (Mouse).